The following is a 334-amino-acid chain: Biotin synthase (334 aa).

The region spanning Thr41–Arg260 is the Radical SAM core domain. Residues Cys56, Cys60, and Cys63 each contribute to the [4Fe-4S] cluster site. Positions 100, 131, 191, and 264 each coordinate [2Fe-2S] cluster.

Belongs to the radical SAM superfamily. Biotin synthase family. Homodimer. [4Fe-4S] cluster is required as a cofactor. [2Fe-2S] cluster serves as cofactor.

It carries out the reaction (4R,5S)-dethiobiotin + (sulfur carrier)-SH + 2 reduced [2Fe-2S]-[ferredoxin] + 2 S-adenosyl-L-methionine = (sulfur carrier)-H + biotin + 2 5'-deoxyadenosine + 2 L-methionine + 2 oxidized [2Fe-2S]-[ferredoxin]. It functions in the pathway cofactor biosynthesis; biotin biosynthesis; biotin from 7,8-diaminononanoate: step 2/2. In terms of biological role, catalyzes the conversion of dethiobiotin (DTB) to biotin by the insertion of a sulfur atom into dethiobiotin via a radical-based mechanism. The protein is Biotin synthase of Bradyrhizobium sp. (strain ORS 278).